Consider the following 388-residue polypeptide: Lipid-A-disaccharide synthase (388 aa).

Belongs to the LpxB family.

It carries out the reaction a lipid X + a UDP-2-N,3-O-bis[(3R)-3-hydroxyacyl]-alpha-D-glucosamine = a lipid A disaccharide + UDP + H(+). The protein operates within bacterial outer membrane biogenesis; LPS lipid A biosynthesis. Condensation of UDP-2,3-diacylglucosamine and 2,3-diacylglucosamine-1-phosphate to form lipid A disaccharide, a precursor of lipid A, a phosphorylated glycolipid that anchors the lipopolysaccharide to the outer membrane of the cell. The polypeptide is Lipid-A-disaccharide synthase (Burkholderia mallei (strain ATCC 23344)).